Consider the following 186-residue polypeptide: Ribosome-recycling factor (186 aa).

This sequence belongs to the RRF family.

It is found in the cytoplasm. Functionally, responsible for the release of ribosomes from messenger RNA at the termination of protein biosynthesis. May increase the efficiency of translation by recycling ribosomes from one round of translation to another. The protein is Ribosome-recycling factor of Chlorobium limicola (strain DSM 245 / NBRC 103803 / 6330).